The chain runs to 334 residues: Glycerol-3-phosphate dehydrogenase [NAD(P)+] 2 (334 aa).

NADPH contacts are provided by tryptophan 16, arginine 36, arginine 37, and lysine 110. Residues lysine 110 and glycine 140 each coordinate sn-glycerol 3-phosphate. Alanine 144 is a binding site for NADPH. Sn-glycerol 3-phosphate contacts are provided by lysine 195, aspartate 248, serine 258, arginine 259, and asparagine 260. Lysine 195 functions as the Proton acceptor in the catalytic mechanism. Arginine 259 contributes to the NADPH binding site. Positions 282 and 284 each coordinate NADPH.

Belongs to the NAD-dependent glycerol-3-phosphate dehydrogenase family.

Its subcellular location is the cytoplasm. It carries out the reaction sn-glycerol 3-phosphate + NAD(+) = dihydroxyacetone phosphate + NADH + H(+). The enzyme catalyses sn-glycerol 3-phosphate + NADP(+) = dihydroxyacetone phosphate + NADPH + H(+). It functions in the pathway membrane lipid metabolism; glycerophospholipid metabolism. In terms of biological role, catalyzes the reduction of the glycolytic intermediate dihydroxyacetone phosphate (DHAP) to sn-glycerol 3-phosphate (G3P), the key precursor for phospholipid synthesis. This Mycobacterium tuberculosis (strain ATCC 25618 / H37Rv) protein is Glycerol-3-phosphate dehydrogenase [NAD(P)+] 2.